Reading from the N-terminus, the 63-residue chain is Laccase-C1 (63 aa).

It belongs to the multicopper oxidase family. As to quaternary structure, monomer. Requires Cu cation as cofactor. Post-translationally, glycosylated; contains 16% carbohydrates.

The protein resides in the secreted. The catalysed reaction is 4 hydroquinone + O2 = 4 benzosemiquinone + 2 H2O. With respect to regulation, inhibited by sodium azide. Functionally, lignin degradation and detoxification of lignin-derived products. Oxidation of a broad range of substrates including mono-, di- and polyphenols, aromatic amines and methoxy-substituted phenols accompanied by reduction of oxygen to water. The chain is Laccase-C1 from Cerrena unicolor (Canker rot fungus).